We begin with the raw amino-acid sequence, 66 residues long: LYR motif-containing protein PHYPADRAFT_186863 (66 aa).

It belongs to the complex I LYR family. LYRM9 subfamily.

The sequence is that of LYR motif-containing protein PHYPADRAFT_186863 from Physcomitrium patens (Spreading-leaved earth moss).